The primary structure comprises 210 residues: 3-hexulose-6-phosphate synthase (210 aa).

It belongs to the HPS/KGPDC family. HPS subfamily.

It carries out the reaction D-ribulose 5-phosphate + formaldehyde = D-arabino-hex-3-ulose 6-phosphate. Its pathway is one-carbon metabolism; formaldehyde assimilation via RuMP pathway; D-fructose 6-phosphate from D-ribulose 5-phosphate and formaldehyde: step 1/2. Its function is as follows. Catalyzes the condensation of ribulose 5-phosphate with formaldehyde to form 3-hexulose 6-phosphate. This Staphylococcus aureus (strain NCTC 8325 / PS 47) protein is 3-hexulose-6-phosphate synthase.